Consider the following 433-residue polypeptide: Serine hydroxymethyltransferase (433 aa).

(6S)-5,6,7,8-tetrahydrofolate contacts are provided by residues Leu-133 and 137–139 (GHL). The residue at position 242 (Lys-242) is an N6-(pyridoxal phosphate)lysine. (6S)-5,6,7,8-tetrahydrofolate is bound at residue 366-368 (SPF).

It belongs to the SHMT family. As to quaternary structure, homodimer. Pyridoxal 5'-phosphate serves as cofactor.

It localises to the cytoplasm. The catalysed reaction is (6R)-5,10-methylene-5,6,7,8-tetrahydrofolate + glycine + H2O = (6S)-5,6,7,8-tetrahydrofolate + L-serine. The protein operates within one-carbon metabolism; tetrahydrofolate interconversion. Its pathway is amino-acid biosynthesis; glycine biosynthesis; glycine from L-serine: step 1/1. Functionally, catalyzes the reversible interconversion of serine and glycine with tetrahydrofolate (THF) serving as the one-carbon carrier. This reaction serves as the major source of one-carbon groups required for the biosynthesis of purines, thymidylate, methionine, and other important biomolecules. Also exhibits THF-independent aldolase activity toward beta-hydroxyamino acids, producing glycine and aldehydes, via a retro-aldol mechanism. This chain is Serine hydroxymethyltransferase, found in Beijerinckia indica subsp. indica (strain ATCC 9039 / DSM 1715 / NCIMB 8712).